Here is a 542-residue protein sequence, read N- to C-terminus: Sensory neuron membrane protein 2 (542 aa).

Topologically, residues 1-487 are extracellular; that stretch reads MMVMNTELRQ…MKVLTLLDIV (487 aa). N-linked (GlcNAc...) asparagine glycans are attached at residues N33, N128, N238, and N274. Cystine bridges form between C283/C351, C312/C378, and C353/C367. Residues 488-508 traverse the membrane as a helical segment; that stretch reads QWVMIGSGLLLAIIMPIVYFI. Residues 509-542 are Cytoplasmic-facing; sequence KRRPSSGSITPTLTTTTSTVSISDGGGLGGNPQK.

This sequence belongs to the CD36 family. In terms of tissue distribution, detected in the antenna, legs and wings. Higher levels of expression detected in male compared to female.

It is found in the cell membrane. Functionally, plays an olfactory role that is not restricted to pheromone sensitivity. The sequence is that of Sensory neuron membrane protein 2 from Aedes aegypti (Yellowfever mosquito).